The primary structure comprises 618 residues: Methylmalonyl-CoA mutase small subunit (618 aa).

Belongs to the methylmalonyl-CoA mutase family. In terms of assembly, heterodimer of an alpha and a beta chain. Adenosylcob(III)alamin is required as a cofactor.

It catalyses the reaction (R)-methylmalonyl-CoA = succinyl-CoA. The protein operates within metabolic intermediate metabolism; propanoyl-CoA degradation; succinyl-CoA from propanoyl-CoA: step 3/3. Its function is as follows. Catalyzes the isomerization of succinyl-CoA to methylmalonyl-CoA during synthesis of propionate from tricarboxylic acid-cycle intermediates. This is Methylmalonyl-CoA mutase small subunit (mutA) from Porphyromonas gingivalis (strain ATCC BAA-308 / W83).